Reading from the N-terminus, the 274-residue chain is Diaminopimelate epimerase (274 aa).

Substrate is bound by residues Asn11, Gln44, and Asn64. The active-site Proton donor is the Cys73. Substrate-binding positions include 74-75 (GN), Asn157, Asn190, and 208-209 (ER). The active-site Proton acceptor is Cys217. A substrate-binding site is contributed by 218–219 (GS).

Belongs to the diaminopimelate epimerase family. As to quaternary structure, homodimer.

The protein localises to the cytoplasm. The catalysed reaction is (2S,6S)-2,6-diaminopimelate = meso-2,6-diaminopimelate. It functions in the pathway amino-acid biosynthesis; L-lysine biosynthesis via DAP pathway; DL-2,6-diaminopimelate from LL-2,6-diaminopimelate: step 1/1. Its function is as follows. Catalyzes the stereoinversion of LL-2,6-diaminopimelate (L,L-DAP) to meso-diaminopimelate (meso-DAP), a precursor of L-lysine and an essential component of the bacterial peptidoglycan. The chain is Diaminopimelate epimerase from Escherichia coli O6:H1 (strain CFT073 / ATCC 700928 / UPEC).